Here is a 142-residue protein sequence, read N- to C-terminus: UPF0179 protein PYRAB06360 (142 aa).

The protein belongs to the UPF0179 family.

The polypeptide is UPF0179 protein PYRAB06360 (Pyrococcus abyssi (strain GE5 / Orsay)).